The sequence spans 347 residues: Phosphate acyltransferase (347 aa).

The protein belongs to the PlsX family. Homodimer. Probably interacts with PlsY.

The protein localises to the cytoplasm. It carries out the reaction a fatty acyl-[ACP] + phosphate = an acyl phosphate + holo-[ACP]. Its pathway is lipid metabolism; phospholipid metabolism. Functionally, catalyzes the reversible formation of acyl-phosphate (acyl-PO(4)) from acyl-[acyl-carrier-protein] (acyl-ACP). This enzyme utilizes acyl-ACP as fatty acyl donor, but not acyl-CoA. The chain is Phosphate acyltransferase from Syntrophotalea carbinolica (strain DSM 2380 / NBRC 103641 / GraBd1) (Pelobacter carbinolicus).